We begin with the raw amino-acid sequence, 327 residues long: Transaldolase (327 aa).

Lys132 serves as the catalytic Schiff-base intermediate with substrate.

Belongs to the transaldolase family. Type 1 subfamily.

The protein resides in the cytoplasm. The catalysed reaction is D-sedoheptulose 7-phosphate + D-glyceraldehyde 3-phosphate = D-erythrose 4-phosphate + beta-D-fructose 6-phosphate. The protein operates within carbohydrate degradation; pentose phosphate pathway; D-glyceraldehyde 3-phosphate and beta-D-fructose 6-phosphate from D-ribose 5-phosphate and D-xylulose 5-phosphate (non-oxidative stage): step 2/3. Transaldolase is important for the balance of metabolites in the pentose-phosphate pathway. In Chlamydia pneumoniae (Chlamydophila pneumoniae), this protein is Transaldolase.